Consider the following 334-residue polypeptide: Probable peptidoglycan endopeptidase LytE (334 aa).

Positions 1 to 25 (MKKQIITATTAVVLGSTLFAGAASA) are cleaved as a signal peptide. 3 consecutive LysM domains span residues 26-69 (QSIK…TLSI), 86-129 (STYK…VLKL), and 149-192 (STYK…VLKV). Disordered stretches follow at residues 70 to 89 (NGKSTSSKSSSSSSSSSTYK), 131 to 153 (GSTSSSSSSSSKVSSSSTSTYKV), and 195 to 215 (TSTSSSKPASSSSSSSSKTSS). Low complexity-rich tracts occupy residues 72-87 (KSTSSKSSSSSSSSST) and 132-153 (STSSSSSSSSKVSSSSTSTYKV). Residues 217–334 (SLNVSKLVSD…KPRYLGAKRF (118 aa)) enclose the NlpC/P60 domain. Catalysis depends on Cys-247, which acts as the Nucleophile. His-296 acts as the Proton acceptor in catalysis. The active site involves His-308.

It belongs to the peptidase C40 family.

The protein resides in the secreted. It is found in the cell wall. In terms of biological role, cell wall hydrolase that cleaves gamma-D-glutamate-meso-diaminopimelate bonds in peptidoglycan. Seems to play a role in cell separation during vegetative growth. The protein is Probable peptidoglycan endopeptidase LytE (lytE) of Bacillus subtilis (strain 168).